Here is a 141-residue protein sequence, read N- to C-terminus: MKPKGRIVGIDYGTKRIGLAMTDPLQLFASPVGTFEPGGLHHELRRIMQGDTVDLAVVGSPVCDDGSGNAMTAVVDRFVEELRAAFPDLRVERVDESHSSREASRILAASGKSRKVRREKGRLDSAAACVLLTRFLEENRG.

The protein belongs to the YqgF nuclease family.

It localises to the cytoplasm. Functionally, could be a nuclease involved in processing of the 5'-end of pre-16S rRNA. This chain is Putative pre-16S rRNA nuclease, found in Chlorobium luteolum (strain DSM 273 / BCRC 81028 / 2530) (Pelodictyon luteolum).